Here is a 198-residue protein sequence, read N- to C-terminus: Imidazole glycerol phosphate synthase subunit HisH (198 aa).

Residues 2–198 form the Glutamine amidotransferase type-1 domain; the sequence is KALLIDYGSG…ALARRYFEVL (197 aa). C80 serves as the catalytic Nucleophile. Active-site residues include H176 and E178.

Heterodimer of HisH and HisF.

It is found in the cytoplasm. It catalyses the reaction 5-[(5-phospho-1-deoxy-D-ribulos-1-ylimino)methylamino]-1-(5-phospho-beta-D-ribosyl)imidazole-4-carboxamide + L-glutamine = D-erythro-1-(imidazol-4-yl)glycerol 3-phosphate + 5-amino-1-(5-phospho-beta-D-ribosyl)imidazole-4-carboxamide + L-glutamate + H(+). The enzyme catalyses L-glutamine + H2O = L-glutamate + NH4(+). It functions in the pathway amino-acid biosynthesis; L-histidine biosynthesis; L-histidine from 5-phospho-alpha-D-ribose 1-diphosphate: step 5/9. In terms of biological role, IGPS catalyzes the conversion of PRFAR and glutamine to IGP, AICAR and glutamate. The HisH subunit catalyzes the hydrolysis of glutamine to glutamate and ammonia as part of the synthesis of IGP and AICAR. The resulting ammonia molecule is channeled to the active site of HisF. The chain is Imidazole glycerol phosphate synthase subunit HisH from Thermus thermophilus (strain ATCC BAA-163 / DSM 7039 / HB27).